Consider the following 223-residue polypeptide: Large ribosomal subunit protein uL3 (223 aa).

The tract at residues 137 to 157 is disordered; the sequence is GRASHGNSRSHNVPGSIGMAQ. Glutamine 157 bears the N5-methylglutamine mark.

This sequence belongs to the universal ribosomal protein uL3 family. Part of the 50S ribosomal subunit. Forms a cluster with proteins L14 and L19. Post-translationally, methylated by PrmB.

One of the primary rRNA binding proteins, it binds directly near the 3'-end of the 23S rRNA, where it nucleates assembly of the 50S subunit. This is Large ribosomal subunit protein uL3 from Burkholderia pseudomallei (strain 1106a).